The chain runs to 169 residues: Peptide deformylase (169 aa).

Fe cation-binding residues include cysteine 91 and histidine 133. Glutamate 134 is an active-site residue. Fe cation is bound at residue histidine 137.

This sequence belongs to the polypeptide deformylase family. The cofactor is Fe(2+).

It carries out the reaction N-terminal N-formyl-L-methionyl-[peptide] + H2O = N-terminal L-methionyl-[peptide] + formate. Its function is as follows. Removes the formyl group from the N-terminal Met of newly synthesized proteins. Requires at least a dipeptide for an efficient rate of reaction. N-terminal L-methionine is a prerequisite for activity but the enzyme has broad specificity at other positions. The sequence is that of Peptide deformylase from Erwinia tasmaniensis (strain DSM 17950 / CFBP 7177 / CIP 109463 / NCPPB 4357 / Et1/99).